Consider the following 623-residue polypeptide: 1-deoxy-D-xylulose-5-phosphate synthase (623 aa).

Residues His80 and 121–123 contribute to the thiamine diphosphate site; that span reads GHS. Asp152 is a binding site for Mg(2+). Residues 153 to 154, Asn181, Tyr289, and Glu372 each bind thiamine diphosphate; that span reads GA. Asn181 provides a ligand contact to Mg(2+).

Belongs to the transketolase family. DXPS subfamily. In terms of assembly, homodimer. The cofactor is Mg(2+). It depends on thiamine diphosphate as a cofactor.

The catalysed reaction is D-glyceraldehyde 3-phosphate + pyruvate + H(+) = 1-deoxy-D-xylulose 5-phosphate + CO2. Its pathway is metabolic intermediate biosynthesis; 1-deoxy-D-xylulose 5-phosphate biosynthesis; 1-deoxy-D-xylulose 5-phosphate from D-glyceraldehyde 3-phosphate and pyruvate: step 1/1. Functionally, catalyzes the acyloin condensation reaction between C atoms 2 and 3 of pyruvate and glyceraldehyde 3-phosphate to yield 1-deoxy-D-xylulose-5-phosphate (DXP). This Baumannia cicadellinicola subsp. Homalodisca coagulata protein is 1-deoxy-D-xylulose-5-phosphate synthase.